The following is a 198-amino-acid chain: Nucleoid occlusion factor SlmA (198 aa).

Residues 9-70 enclose the HTH tetR-type domain; the sequence is RNRREEILQA…SLIEFIEDSL (62 aa). The H-T-H motif DNA-binding region spans 33-52; it reads TTAKLAANVGVSEAALYRHF. Positions 117–144 form a coiled coil; that stretch reads EQDRLQGRINQLFERIEAQLRQVLKERK.

It belongs to the nucleoid occlusion factor SlmA family. Homodimer. Interacts with FtsZ.

The protein localises to the cytoplasm. The protein resides in the nucleoid. Its function is as follows. Required for nucleoid occlusion (NO) phenomenon, which prevents Z-ring formation and cell division over the nucleoid. Acts as a DNA-associated cell division inhibitor that binds simultaneously chromosomal DNA and FtsZ, and disrupts the assembly of FtsZ polymers. SlmA-DNA-binding sequences (SBS) are dispersed on non-Ter regions of the chromosome, preventing FtsZ polymerization at these regions. In Serratia proteamaculans (strain 568), this protein is Nucleoid occlusion factor SlmA.